The chain runs to 151 residues: 16.9 kDa class I heat shock protein 1 (151 aa).

One can recognise a sHSP domain in the interval 37 to 151 (ETAAFANARV…PEVKAIEISG (115 aa)).

The protein belongs to the small heat shock protein (HSP20) family. May form oligomeric structures.

Its subcellular location is the cytoplasm. The protein is 16.9 kDa class I heat shock protein 1 (hsp16.9A) of Triticum aestivum (Wheat).